The sequence spans 308 residues: Glutamyl-Q tRNA(Asp) synthetase (308 aa).

Residues 19–23 (RFAPS) and Glu55 contribute to the L-glutamate site. The 'HIGH' region motif lies at 22-32 (PSPSGELHFGS). Zn(2+) is bound by residues Cys111, Cys113, Tyr125, and Cys129. Residues Tyr182 and Arg200 each contribute to the L-glutamate site. Residues 238-242 (KLSKQ) carry the 'KMSKS' region motif. Lys241 provides a ligand contact to ATP.

This sequence belongs to the class-I aminoacyl-tRNA synthetase family. GluQ subfamily. Zn(2+) serves as cofactor.

In terms of biological role, catalyzes the tRNA-independent activation of glutamate in presence of ATP and the subsequent transfer of glutamate onto a tRNA(Asp). Glutamate is transferred on the 2-amino-5-(4,5-dihydroxy-2-cyclopenten-1-yl) moiety of the queuosine in the wobble position of the QUC anticodon. The protein is Glutamyl-Q tRNA(Asp) synthetase of Escherichia coli O157:H7.